The chain runs to 580 residues: Glutamine--tRNA ligase (580 aa).

Positions 41 to 51 match the 'HIGH' region motif; the sequence is PEPNGYLHIGH. ATP-binding positions include 42–44 and 48–54; these read EPN and HIGHAKA. The L-glutamine site is built by aspartate 74 and tyrosine 218. ATP is bound by residues threonine 237, 285–286, and 293–295; these read RL and MSK. Positions 292-296 match the 'KMSKS' region motif; that stretch reads VMSKR.

It belongs to the class-I aminoacyl-tRNA synthetase family. As to quaternary structure, monomer.

It is found in the cytoplasm. It carries out the reaction tRNA(Gln) + L-glutamine + ATP = L-glutaminyl-tRNA(Gln) + AMP + diphosphate. The sequence is that of Glutamine--tRNA ligase from Xylella fastidiosa (strain Temecula1 / ATCC 700964).